The sequence spans 381 residues: Phosphatidyl-myo-inositol mannosyltransferase (381 aa).

Positions 9 and 16 each coordinate GDP-alpha-D-mannose. Residues Q18, 69 to 70 (FN), and R75 contribute to the a 1,2-diacyl-sn-glycero-3-phospho-(1D-myo-inositol) site. GDP-alpha-D-mannose is bound by residues R204, 209-210 (RK), 251-253 (LDD), R256, 274-278 (ESFGI), and E282.

It belongs to the glycosyltransferase group 1 family. Glycosyltransferase 4 subfamily. Monomer. Requires Mg(2+) as cofactor.

The protein localises to the cell membrane. It catalyses the reaction a 1,2-diacyl-sn-glycero-3-phospho-(1D-myo-inositol) + GDP-alpha-D-mannose = a 1,2-diacyl-sn-glycero-3-phospho-[alpha-D-mannopyranosyl-(1&lt;-&gt;6)-D-myo-inositol] + GDP + H(+). The protein operates within phospholipid metabolism; phosphatidylinositol metabolism. Involved in the biosynthesis of phosphatidyl-myo-inositol mannosides (PIM) which are early precursors in the biosynthesis of lipomannans (LM) and lipoarabinomannans (LAM). Catalyzes the addition of a mannosyl residue from GDP-D-mannose (GDP-Man) to the position 2 of the carrier lipid phosphatidyl-myo-inositol (PI) to generate a phosphatidyl-myo-inositol bearing an alpha-1,2-linked mannose residue (PIM1). The sequence is that of Phosphatidyl-myo-inositol mannosyltransferase from Propionibacterium freudenreichii subsp. shermanii (strain ATCC 9614 / DSM 4902 / CIP 103027 / NCIMB 8099 / CIRM-BIA1).